The primary structure comprises 293 residues: Small ribosomal subunit biogenesis GTPase RsgA (293 aa).

The region spanning 63–223 (QNELVRPPIA…VADTPGFSAL (161 aa)) is the CP-type G domain. Residues 112-115 (SKID) and 166-174 (GQSGVGKSS) each bind GTP. Positions 247, 252, 254, and 260 each coordinate Zn(2+).

The protein belongs to the TRAFAC class YlqF/YawG GTPase family. RsgA subfamily. Monomer. Associates with 30S ribosomal subunit, binds 16S rRNA. Zn(2+) serves as cofactor.

It is found in the cytoplasm. Functionally, one of several proteins that assist in the late maturation steps of the functional core of the 30S ribosomal subunit. Helps release RbfA from mature subunits. May play a role in the assembly of ribosomal proteins into the subunit. Circularly permuted GTPase that catalyzes slow GTP hydrolysis, GTPase activity is stimulated by the 30S ribosomal subunit. The sequence is that of Small ribosomal subunit biogenesis GTPase RsgA from Geobacillus kaustophilus (strain HTA426).